Here is a 483-residue protein sequence, read N- to C-terminus: Probable glycosyltransferase 6 (483 aa).

The Cytoplasmic portion of the chain corresponds to 1–40 (MAASETAPFGVSAASKGGGGVAGARAQHGQLAVAGRVHDA). Residues 41–61 (LVFAAGAVAAVLVLLATASFL) traverse the membrane as a helical; Signal-anchor for type II membrane protein segment. Residues 62–483 (SPMPVTNLVA…PLPFDYPAAR (422 aa)) are Lumenal-facing. An N-linked (GlcNAc...) asparagine glycan is attached at N144.

Belongs to the glycosyltransferase 34 family.

Its subcellular location is the golgi apparatus membrane. Functionally, probable glycosyltransferase that may be involved in the biosynthesis of xyloglucan. In Oryza sativa subsp. japonica (Rice), this protein is Probable glycosyltransferase 6.